Consider the following 114-residue polypeptide: Transmembrane protein 256 homolog (114 aa).

The first 25 residues, 1-25, serve as a signal peptide directing secretion; that stretch reads MAAGRVWGRLGAVSGALAVTAGAYG. At 26 to 64 the chain is on the extracellular side; that stretch reads AHGFRRSDRDEYLKELFETGNRYHFLHSLALLAVPHCRR. Residues 65–85 traverse the membrane as a helical segment; sequence PLLAGSLLTSGIVLFSGTFYY. Over 86–93 the chain is Cytoplasmic; that stretch reads QALSGDPT. The helical transmembrane segment at 94–114 threads the bilayer; that stretch reads LTKAAPYGGTLLILGWAAMAL.

The protein belongs to the TMEM256 family.

The protein resides in the cell membrane. The protein is Transmembrane protein 256 homolog of Bufo gargarizans (Asian toad).